Reading from the N-terminus, the 1238-residue chain is uncharacterized protein (1238 aa).

Disordered stretches follow at residues 22 to 83, 96 to 150, 169 to 250, 264 to 694, 739 to 915, 936 to 955, and 1057 to 1089; these read LQSA…QEHL, SSRQ…IASP, FEPD…HQML, QLNS…AAMV, TKAA…SVPE, THSAEDVNEKQTKVKKAPHE, and PKISMHKRKRKQTHDSSISYSDDPNESRSQCSS. Residues 35-49 show a composition bias toward low complexity; the sequence is QPPNQQPHQTQQQQQ. A compositionally biased stretch (polar residues) spans 58 to 72; it reads PSIQNLTTNATPTST. Over residues 73 to 83 the composition is skewed to low complexity; the sequence is QLQQQQQQEHL. Residues 96–110 are compositionally biased toward polar residues; that stretch reads SSRQNQGAPSGNLSN. The span at 125 to 145 shows a compositional bias: low complexity; sequence SVSGNTNHTGSNSSSNSGSNN. A compositionally biased stretch (polar residues) spans 188–204; the sequence is SASSASKLPTHNVQQQH. 3 stretches are compositionally biased toward low complexity: residues 272–287, 309–334, and 393–406; these read SYQHMQQDQTQSQSHP, PLLTSGQFHAQPQDASQQQTASSSQH, and SNEESLESNSNSSN. Over residues 433–450 the composition is skewed to polar residues; sequence SKPQHPQQAANLNNSCSP. Serine 453 carries the post-translational modification Phosphoserine. The segment covering 463 to 472 has biased composition (polar residues); sequence PFSTQKQSQT. Positions 523–536 are enriched in basic and acidic residues; that stretch reads TEQHRMQQDDEPPK. Low complexity-rich tracts occupy residues 549–570 and 632–641; these read QSNSSSSSSSSSSANTHSSQSS and TTAAVAAPPA. Threonine 642 is modified (phosphothreonine). Positions 678 to 688 are enriched in basic and acidic residues; it reads ERISSPEKPAE. Phosphoserine occurs at positions 682, 749, and 753. The span at 755 to 764 shows a compositional bias: polar residues; the sequence is IPQSRSTSTP. Phosphoserine occurs at positions 793 and 799. The segment covering 832-860 has biased composition (low complexity); sequence STSAAAAAALAARQLSEAASATKSKPAAG. Residues 861-874 are compositionally biased toward basic residues; sequence AKKKNAGVKGKKGS. Residues 937 to 947 show a composition bias toward basic and acidic residues; sequence HSAEDVNEKQT. The segment covering 1071–1089 has biased composition (polar residues); that stretch reads DSSISYSDDPNESRSQCSS. The segment at 1089–1131 adopts a C2HC pre-PHD-type; degenerate zinc-finger fold; the sequence is SVDLLDCSTESKFVETFRGMGKTSENGFEVWLHEDCAVWSNDI. A Phosphoserine modification is found at serine 1099. A PHD-type zinc finger spans residues 1151-1199; it reads YQCVLCQQTGASICCFQRCCKAAAHVPCGRSANWSLSEEDRKVYCHLHR.

This is an uncharacterized protein from Drosophila melanogaster (Fruit fly).